The primary structure comprises 315 residues: Mitochondrial outer membrane import complex protein METAXIN (315 aa).

At M1 the chain carries N-acetylmethionine. A coiled-coil region spans residues E157–L181. A helical transmembrane segment spans residues L195–V215. Residues A240–K277 form a disordered region. Residues P267–K277 are compositionally biased toward basic and acidic residues. The chain crosses the membrane as a helical span at residues F284–S304.

It belongs to the metaxin family. In terms of assembly, part of a high molecular weight complex that is distinct from the TOM complex. Interacts with a variety of mitochondrial precursor proteins. As to expression, expressed in roots, young cotyledons, flowers and leaves.

It is found in the mitochondrion inner membrane. Its subcellular location is the mitochondrion outer membrane. Its function is as follows. Involved in transport of proteins into the mitochondrion. The chain is Mitochondrial outer membrane import complex protein METAXIN (MTX1) from Arabidopsis thaliana (Mouse-ear cress).